A 255-amino-acid polypeptide reads, in one-letter code: 4-diphosphocytidyl-2-C-methyl-D-erythritol kinase (255 aa).

Lysine 9 is an active-site residue. 95–105 (PSQAGLGGGSS) provides a ligand contact to ATP. Aspartate 137 is an active-site residue.

Belongs to the GHMP kinase family. IspE subfamily.

It carries out the reaction 4-CDP-2-C-methyl-D-erythritol + ATP = 4-CDP-2-C-methyl-D-erythritol 2-phosphate + ADP + H(+). The protein operates within isoprenoid biosynthesis; isopentenyl diphosphate biosynthesis via DXP pathway; isopentenyl diphosphate from 1-deoxy-D-xylulose 5-phosphate: step 3/6. In terms of biological role, catalyzes the phosphorylation of the position 2 hydroxy group of 4-diphosphocytidyl-2C-methyl-D-erythritol. The sequence is that of 4-diphosphocytidyl-2-C-methyl-D-erythritol kinase from Sulfurovum sp. (strain NBC37-1).